Reading from the N-terminus, the 189-residue chain is MVKVIASSVRKGNVLDVDGKLYVVLTAQNFHPGKGTPVTQVDMRRIVDGVKVSERWRTTEQVERAFVEDVNFQYLYEDGEGFHFMNPATYDQVVVSAETMGDQKAYLQEGMTCILSIHEGVPLALELPRHVTLEIVETEPVVKGQTASSSYKPAMLSNGIRTSVPPHIDAGTRVVIATEDNSYVERAKD.

Belongs to the elongation factor P family.

It localises to the cytoplasm. The protein operates within protein biosynthesis; polypeptide chain elongation. Functionally, involved in peptide bond synthesis. Stimulates efficient translation and peptide-bond synthesis on native or reconstituted 70S ribosomes in vitro. Probably functions indirectly by altering the affinity of the ribosome for aminoacyl-tRNA, thus increasing their reactivity as acceptors for peptidyl transferase. This Rhizobium etli (strain ATCC 51251 / DSM 11541 / JCM 21823 / NBRC 15573 / CFN 42) protein is Elongation factor P.